The following is a 919-amino-acid chain: Glutamate receptor ionotropic, kainate 3 (919 aa).

The signal sequence occupies residues 1 to 31 (MTAPWRRLRSLVWEYWAGLLVCAFWIPDSRG). The Extracellular portion of the chain corresponds to 32–563 (MPHVIRIGGI…VFSFLNPLSP (532 aa)). 7 N-linked (GlcNAc...) asparagine glycosylation sites follow: N70, N76, N278, N381, N415, N426, and N433. C99 and C350 are joined by a disulfide. L-glutamate is bound by residues P518, T520, and R525. N548 and N551 each carry an N-linked (GlcNAc...) asparagine glycan. Residues 564–584 (DIWMYVLLAYLGVSCVLFVIA) traverse the membrane as a helical segment. Residues 585–636 (RFSPYEWYDAHPCNPGSEVVENNFTLLNSFWFGMGSLMQQGSELMPKALSTR) lie on the Cytoplasmic side of the membrane. Residues 637-657 (IIGGIWWFFTLIIISSYTANL) traverse the membrane as a helical segment. Topologically, residues 658–820 (AAFLTVERME…KEASALGIQK (163 aa)) are extracellular. Positions 691, 692, and 739 each coordinate L-glutamate. A glycan (N-linked (GlcNAc...) asparagine) is linked at N752. The chain crosses the membrane as a helical span at residues 821-841 (IGGIFIVLAAGLVLSVLVAVG). Over 842 to 919 (EFVYKLRKTA…CSTSLAPVFP (78 aa)) the chain is Cytoplasmic. A Phosphoserine modification is found at S869. A Glycyl lysine isopeptide (Lys-Gly) (interchain with G-Cter in SUMO1) cross-link involves residue K887.

This sequence belongs to the glutamate-gated ion channel (TC 1.A.10.1) family. GRIK3 subfamily. As to quaternary structure, homotetramer, and heterotetramer with either GRIK4 or GRIK5. Can form functional heteromeric receptors with GRIK2. Interacts with PRKCABP. Interacts with NETO2.

Its subcellular location is the cell membrane. It is found in the postsynaptic cell membrane. It carries out the reaction Ca(2+)(in) = Ca(2+)(out). Its function is as follows. Ionotropic glutamate receptor that functions as a cation-permeable ligand-gated ion channel, gated by L-glutamate and the glutamatergic agonist kainic acid. Binding of the excitatory neurotransmitter L-glutamate induces a conformation change, leading to the opening of the cation channel, and thereby converts the chemical signal to an electrical impulse. The receptor then desensitizes rapidly and enters a transient inactive state, characterized by the presence of bound agonist. In association with GRIK2, involved in presynaptic facilitation of glutamate release at hippocampal mossy fiber synapses. This Homo sapiens (Human) protein is Glutamate receptor ionotropic, kainate 3 (GRIK3).